The chain runs to 329 residues: DNA-directed RNA polymerase subunit alpha (329 aa).

An alpha N-terminal domain (alpha-NTD) region spans residues 1 to 235 (MQGSVTEFLK…EQLDAFVDLR (235 aa)). An alpha C-terminal domain (alpha-CTD) region spans residues 249–329 (FDPILLRPVD…NWPPASIAED (81 aa)).

The protein belongs to the RNA polymerase alpha chain family. Homodimer. The RNAP catalytic core consists of 2 alpha, 1 beta, 1 beta' and 1 omega subunit. When a sigma factor is associated with the core the holoenzyme is formed, which can initiate transcription.

The enzyme catalyses RNA(n) + a ribonucleoside 5'-triphosphate = RNA(n+1) + diphosphate. Functionally, DNA-dependent RNA polymerase catalyzes the transcription of DNA into RNA using the four ribonucleoside triphosphates as substrates. This is DNA-directed RNA polymerase subunit alpha from Pasteurella multocida (strain Pm70).